Here is a 133-residue protein sequence, read N- to C-terminus: MSKPKTPRSIAENEAQAIVSNLRVSPRKLNLVAQLIRNRKASDAVATLTFSKRRIAQAVKKALESAIANAENNHQLDVDRLVVSRAEVGRSIVMRRFHARGRGRAARVEKWFSHLKIVVAERSQETETKAEAA.

This sequence belongs to the universal ribosomal protein uL22 family. As to quaternary structure, part of the 50S ribosomal subunit.

Functionally, this protein binds specifically to 23S rRNA; its binding is stimulated by other ribosomal proteins, e.g. L4, L17, and L20. It is important during the early stages of 50S assembly. It makes multiple contacts with different domains of the 23S rRNA in the assembled 50S subunit and ribosome. Its function is as follows. The globular domain of the protein is located near the polypeptide exit tunnel on the outside of the subunit, while an extended beta-hairpin is found that lines the wall of the exit tunnel in the center of the 70S ribosome. The protein is Large ribosomal subunit protein uL22 of Granulibacter bethesdensis (strain ATCC BAA-1260 / CGDNIH1).